A 507-amino-acid polypeptide reads, in one-letter code: ATP synthase subunit alpha, chloroplastic (507 aa).

170–177 (GDRQTGKT) provides a ligand contact to ATP.

The protein belongs to the ATPase alpha/beta chains family. In terms of assembly, F-type ATPases have 2 components, CF(1) - the catalytic core - and CF(0) - the membrane proton channel. CF(1) has five subunits: alpha(3), beta(3), gamma(1), delta(1), epsilon(1). CF(0) has four main subunits: a, b, b' and c.

The protein resides in the plastid. It localises to the chloroplast thylakoid membrane. It carries out the reaction ATP + H2O + 4 H(+)(in) = ADP + phosphate + 5 H(+)(out). Its function is as follows. Produces ATP from ADP in the presence of a proton gradient across the membrane. The alpha chain is a regulatory subunit. The sequence is that of ATP synthase subunit alpha, chloroplastic from Spinacia oleracea (Spinach).